The primary structure comprises 413 residues: Serine hydroxymethyltransferase (413 aa).

Residues leucine 117 and glycine 121 to leucine 123 each bind (6S)-5,6,7,8-tetrahydrofolate. Lysine 226 bears the N6-(pyridoxal phosphate)lysine mark. Serine 349–phenylalanine 351 serves as a coordination point for (6S)-5,6,7,8-tetrahydrofolate.

Belongs to the SHMT family. As to quaternary structure, homodimer. It depends on pyridoxal 5'-phosphate as a cofactor.

The protein localises to the cytoplasm. It catalyses the reaction (6R)-5,10-methylene-5,6,7,8-tetrahydrofolate + glycine + H2O = (6S)-5,6,7,8-tetrahydrofolate + L-serine. It functions in the pathway one-carbon metabolism; tetrahydrofolate interconversion. The protein operates within amino-acid biosynthesis; glycine biosynthesis; glycine from L-serine: step 1/1. In terms of biological role, catalyzes the reversible interconversion of serine and glycine with tetrahydrofolate (THF) serving as the one-carbon carrier. This reaction serves as the major source of one-carbon groups required for the biosynthesis of purines, thymidylate, methionine, and other important biomolecules. Also exhibits THF-independent aldolase activity toward beta-hydroxyamino acids, producing glycine and aldehydes, via a retro-aldol mechanism. This Listeria innocua serovar 6a (strain ATCC BAA-680 / CLIP 11262) protein is Serine hydroxymethyltransferase.